Consider the following 838-residue polypeptide: Probable inorganic carbon transporter subunit DabA (838 aa).

Zn(2+)-binding residues include Cys-353, Asp-355, His-537, and Cys-552.

This sequence belongs to the inorganic carbon transporter (TC 9.A.2) DabA family. Forms a complex with DabB. Zn(2+) serves as cofactor.

It is found in the cell membrane. Functionally, part of an energy-coupled inorganic carbon pump. This is Probable inorganic carbon transporter subunit DabA from Chloroflexus aurantiacus (strain ATCC 29366 / DSM 635 / J-10-fl).